We begin with the raw amino-acid sequence, 1043 residues long: RNA cytidine acetyltransferase (1043 aa).

Residues Gly-285–Leu-294 and Arg-462 contribute to the ATP site. The 186-residue stretch at Val-551 to Asn-736 folds into the N-acetyltransferase domain. Acetyl-CoA contacts are provided by residues Val-622–Val-624, Gln-629–Gly-635, and Arg-723. The interval Ile-1020–Arg-1043 is disordered. Over residues Asn-1030–Arg-1043 the composition is skewed to basic residues.

This sequence belongs to the RNA cytidine acetyltransferase family. NAT10 subfamily. Part of the small subunit (SSU) processome, composed of more than 70 proteins and the RNA chaperone small nucleolar RNA (snoRNA) U3.

It localises to the nucleus. Its subcellular location is the nucleolus. The catalysed reaction is a cytidine in 18S rRNA + acetyl-CoA + ATP + H2O = an N(4)-acetylcytidine in 18S rRNA + ADP + phosphate + CoA + H(+). It catalyses the reaction a cytidine in tRNA + acetyl-CoA + ATP + H2O = an N(4)-acetylcytidine in tRNA + ADP + phosphate + CoA + H(+). Its function is as follows. RNA cytidine acetyltransferase with specificity toward both 18S rRNA and tRNAs. Catalyzes the formation of N(4)-acetylcytidine (ac4C) in 18S rRNA. Required for early nucleolar cleavages of precursor rRNA at sites A0, A1 and A2 during 18S rRNA synthesis. Catalyzes the formation of ac4C in serine and leucine tRNAs. Requires a tRNA-binding adapter protein for full tRNA acetyltransferase activity but not for 18S rRNA acetylation. Part of the small subunit (SSU) processome, first precursor of the small eukaryotic ribosomal subunit. During the assembly of the SSU processome in the nucleolus, many ribosome biogenesis factors, an RNA chaperone and ribosomal proteins associate with the nascent pre-rRNA and work in concert to generate RNA folding, modifications, rearrangements and cleavage as well as targeted degradation of pre-ribosomal RNA by the RNA exosome. The chain is RNA cytidine acetyltransferase from Caenorhabditis elegans.